Here is a 391-residue protein sequence, read N- to C-terminus: DNA-directed RNA polymerase subunit Rpo1C (391 aa).

This sequence belongs to the RNA polymerase beta' chain family. Part of the RNA polymerase complex.

It localises to the cytoplasm. The protein localises to the chromosome. It catalyses the reaction RNA(n) + a ribonucleoside 5'-triphosphate = RNA(n+1) + diphosphate. DNA-dependent RNA polymerase (RNAP) catalyzes the transcription of DNA into RNA using the four ribonucleoside triphosphates as substrates. Forms part of the jaw domain. In Thermococcus kodakarensis (strain ATCC BAA-918 / JCM 12380 / KOD1) (Pyrococcus kodakaraensis (strain KOD1)), this protein is DNA-directed RNA polymerase subunit Rpo1C.